A 479-amino-acid polypeptide reads, in one-letter code: Aspartyl/glutamyl-tRNA(Asn/Gln) amidotransferase subunit B (479 aa).

The protein belongs to the GatB/GatE family. GatB subfamily. In terms of assembly, heterotrimer of A, B and C subunits.

The catalysed reaction is L-glutamyl-tRNA(Gln) + L-glutamine + ATP + H2O = L-glutaminyl-tRNA(Gln) + L-glutamate + ADP + phosphate + H(+). The enzyme catalyses L-aspartyl-tRNA(Asn) + L-glutamine + ATP + H2O = L-asparaginyl-tRNA(Asn) + L-glutamate + ADP + phosphate + 2 H(+). Its function is as follows. Allows the formation of correctly charged Asn-tRNA(Asn) or Gln-tRNA(Gln) through the transamidation of misacylated Asp-tRNA(Asn) or Glu-tRNA(Gln) in organisms which lack either or both of asparaginyl-tRNA or glutaminyl-tRNA synthetases. The reaction takes place in the presence of glutamine and ATP through an activated phospho-Asp-tRNA(Asn) or phospho-Glu-tRNA(Gln). This chain is Aspartyl/glutamyl-tRNA(Asn/Gln) amidotransferase subunit B, found in Streptococcus equi subsp. zooepidemicus (strain MGCS10565).